Reading from the N-terminus, the 499-residue chain is Glycerol kinase (499 aa).

T13 provides a ligand contact to ADP. Residues T13, T14, and S15 each coordinate ATP. Sn-glycerol 3-phosphate is bound at residue T13. Position 17 (R17) interacts with ADP. 4 residues coordinate sn-glycerol 3-phosphate: R83, E84, Y135, and D244. The glycerol site is built by R83, E84, Y135, D244, and Q245. ADP is bound by residues T266 and G309. Residues T266, G309, Q313, and G410 each contribute to the ATP site. ADP-binding residues include G410 and N414.

Belongs to the FGGY kinase family.

It carries out the reaction glycerol + ATP = sn-glycerol 3-phosphate + ADP + H(+). It participates in polyol metabolism; glycerol degradation via glycerol kinase pathway; sn-glycerol 3-phosphate from glycerol: step 1/1. Inhibited by fructose 1,6-bisphosphate (FBP). Functionally, key enzyme in the regulation of glycerol uptake and metabolism. Catalyzes the phosphorylation of glycerol to yield sn-glycerol 3-phosphate. The polypeptide is Glycerol kinase (Paraburkholderia phymatum (strain DSM 17167 / CIP 108236 / LMG 21445 / STM815) (Burkholderia phymatum)).